A 311-amino-acid chain; its full sequence is Methionyl-tRNA formyltransferase (311 aa).

A (6S)-5,6,7,8-tetrahydrofolate-binding site is contributed by 112-115 (SLLP).

Belongs to the Fmt family.

It carries out the reaction L-methionyl-tRNA(fMet) + (6R)-10-formyltetrahydrofolate = N-formyl-L-methionyl-tRNA(fMet) + (6S)-5,6,7,8-tetrahydrofolate + H(+). Its function is as follows. Attaches a formyl group to the free amino group of methionyl-tRNA(fMet). The formyl group appears to play a dual role in the initiator identity of N-formylmethionyl-tRNA by promoting its recognition by IF2 and preventing the misappropriation of this tRNA by the elongation apparatus. The protein is Methionyl-tRNA formyltransferase of Agrobacterium fabrum (strain C58 / ATCC 33970) (Agrobacterium tumefaciens (strain C58)).